A 203-amino-acid polypeptide reads, in one-letter code: Holliday junction branch migration complex subunit RuvA (203 aa).

The tract at residues 1–64 (MIGRLRGIIL…EDAQLLYGFN (64 aa)) is domain I. Positions 65 to 142 (NKQERTLFKE…KGLHGDLFTP (78 aa)) are domain II. Residues 143-154 (AADLVLTSPASP) are flexible linker. The interval 155-203 (ATDDAEQEAVAALVALGYKPQEASRMVSKIARPDASSETLIREALRAAL) is domain III.

The protein belongs to the RuvA family. As to quaternary structure, homotetramer. Forms an RuvA(8)-RuvB(12)-Holliday junction (HJ) complex. HJ DNA is sandwiched between 2 RuvA tetramers; dsDNA enters through RuvA and exits via RuvB. An RuvB hexamer assembles on each DNA strand where it exits the tetramer. Each RuvB hexamer is contacted by two RuvA subunits (via domain III) on 2 adjacent RuvB subunits; this complex drives branch migration. In the full resolvosome a probable DNA-RuvA(4)-RuvB(12)-RuvC(2) complex forms which resolves the HJ.

The protein localises to the cytoplasm. Functionally, the RuvA-RuvB-RuvC complex processes Holliday junction (HJ) DNA during genetic recombination and DNA repair, while the RuvA-RuvB complex plays an important role in the rescue of blocked DNA replication forks via replication fork reversal (RFR). RuvA specifically binds to HJ cruciform DNA, conferring on it an open structure. The RuvB hexamer acts as an ATP-dependent pump, pulling dsDNA into and through the RuvAB complex. HJ branch migration allows RuvC to scan DNA until it finds its consensus sequence, where it cleaves and resolves the cruciform DNA. This chain is Holliday junction branch migration complex subunit RuvA, found in Citrobacter koseri (strain ATCC BAA-895 / CDC 4225-83 / SGSC4696).